The following is a 332-amino-acid chain: Melanocortin receptor 4 (332 aa).

Residues 1–43 (MNSTHHHGMYTSLHLWNRSSYGLHGNASESLGKGHPDGGCYEQ) are Extracellular-facing. N-linked (GlcNAc...) asparagine glycans are attached at residues Asn2, Asn17, and Asn26. Cystine bridges form between Cys40/Cys279 and Cys271/Cys277. The chain crosses the membrane as a helical span at residues 44–69 (LFVSPEVFVTLGVISLLENILVIVAI). At 70–81 (AKNKNLHSPMYF) the chain is on the cytoplasmic side. Residues 82–106 (FICSLAVADMLVSVSNGSETIVITL) form a helical membrane-spanning segment. Glu100 serves as a coordination point for Ca(2+). At 107–123 (LNSTDTDAQSFTVNIDN) the chain is on the extracellular side. N-linked (GlcNAc...) asparagine glycosylation occurs at Asn108. Positions 122 and 126 each coordinate Ca(2+). The chain crosses the membrane as a helical span at residues 124–145 (VIDSVICSSLLASICSLLSIAV). The Cytoplasmic segment spans residues 146-165 (DRYFTIFYALQYHNIMTVRR). The helical transmembrane segment at 166–186 (VGIIISCIWAACTVSGVLFII) threads the bilayer. The Extracellular portion of the chain corresponds to 187–191 (YSDSS). Residues 192-215 (AVIICLISMFFTMLVLMASLYVHM) traverse the membrane as a helical segment. The Cytoplasmic portion of the chain corresponds to 216 to 248 (FLMARLHIKRIAVLPGTGTIRQGTNMKGAITLT). Residues 249–271 (ILIGVFVVCWAPFFLHLLFYISC) traverse the membrane as a helical segment. Over 272 to 280 (PQNPYCVCF) the chain is Extracellular. Residues 281–304 (MSHFNLYLILIMCNAVIDPLIYAL) form a helical membrane-spanning segment. Residues 305-332 (RSQELRKTFKEIICFYPLGGICELSSRY) are Cytoplasmic-facing. Residue Cys318 is the site of S-palmitoyl cysteine attachment.

Belongs to the G-protein coupled receptor 1 family. In terms of assembly, homodimer; disulfide-linked, also forms higher order oligomers. Interacts with GNAS. Interacts with ATRNL1. Interacts with MGRN1; this interaction competes with GNAS-binding and thus inhibits agonist-induced cAMP production. Interacts with MRAP and MRAP2; these associated factors increase ligand-sensitivity and generation of cAMP.

The protein localises to the cell membrane. Its function is as follows. Hormone receptor that acts as a key component of the leptin-melanocortin pathway at the intersection of homeostatic maintenance of energetic state. Plays a role in regulating food intake: activation by a stimulating hormone such as anorexigenic alpha-melanocyte stimulating hormone (alpha-MSH) inhibits appetite, whereas binding to a natural antagonist like Agouti-related protein/AGRP promotes appetite. G-protein-coupled receptor that activates conventional Galphas signaling leading to induction of anorexogenic signaling in the hypothalamus to result in negative energy balance. Regulates the firing activity of neurons from the hypothalamus by alpha-MSH and AGRP independently of Galphas signaling by ligand-induced coupling of closure of inwardly rectifying potassium channel KCNJ13. In intestinal epithelial cells, plays a role in the inhibition of hepatic glucose production via nesfatin-1/NUCB2 leading to increased cyclic adenosine monophosphate (cAMP) levels and glucagon-like peptide 1 (GLP-1) secretion in the intestinal epithelium. The sequence is that of Melanocortin receptor 4 (Mc4r) from Mus musculus (Mouse).